Consider the following 140-residue polypeptide: Small ribosomal subunit protein uS12 (140 aa).

The disordered stretch occupies residues 1 to 20 (MPTINQLVRKGRQSKVVKSD). Residue Asp-102 is modified to 3-methylthioaspartic acid. The tract at residues 121 to 140 (DGRMQGRSKYGTKRPKAAKK) is disordered. Positions 130–140 (YGTKRPKAAKK) are enriched in basic residues.

Belongs to the universal ribosomal protein uS12 family. Part of the 30S ribosomal subunit. Contacts proteins S8 and S17. May interact with IF1 in the 30S initiation complex.

Its function is as follows. With S4 and S5 plays an important role in translational accuracy. Interacts with and stabilizes bases of the 16S rRNA that are involved in tRNA selection in the A site and with the mRNA backbone. Located at the interface of the 30S and 50S subunits, it traverses the body of the 30S subunit contacting proteins on the other side and probably holding the rRNA structure together. The combined cluster of proteins S8, S12 and S17 appears to hold together the shoulder and platform of the 30S subunit. This Exiguobacterium sibiricum (strain DSM 17290 / CCUG 55495 / CIP 109462 / JCM 13490 / 255-15) protein is Small ribosomal subunit protein uS12.